Reading from the N-terminus, the 447-residue chain is Multicopper oxidase mco (447 aa).

A compositionally biased stretch (basic and acidic residues) spans 1–25 (MMNMKEDKKNTMDMKNMKHHDERKK). Residues 1-28 (MMNMKEDKKNTMDMKNMKHHDERKKLNS) are disordered. 12 residues coordinate Cu cation: H107, H109, H147, H149, H375, H378, H380, H428, C429, H430, H434, and M439.

The protein belongs to the multicopper oxidase family. The cofactor is Cu cation.

The protein resides in the cytoplasm. Its function is as follows. May be involved in copper homeostasis and oxidative stress response. This chain is Multicopper oxidase mco (mco), found in Staphylococcus epidermidis (strain ATCC 12228 / FDA PCI 1200).